Here is a 192-residue protein sequence, read N- to C-terminus: Pyruvate synthase subunit PorC (192 aa).

In terms of assembly, heterotetramer of one alpha, one beta, one delta and one gamma chain.

It carries out the reaction 2 oxidized [2Fe-2S]-[ferredoxin] + pyruvate + CoA = 2 reduced [2Fe-2S]-[ferredoxin] + acetyl-CoA + CO2 + H(+). The sequence is that of Pyruvate synthase subunit PorC (porC) from Thermotoga maritima (strain ATCC 43589 / DSM 3109 / JCM 10099 / NBRC 100826 / MSB8).